Here is a 616-residue protein sequence, read N- to C-terminus: D-glucuronyl C5-epimerase (616 aa).

The Cytoplasmic portion of the chain corresponds to 1–12 (MKCLRWRSNRHR). The helical; Signal-anchor for type II membrane protein transmembrane segment at 13–29 (IYLLVACGALFLLNRHL) threads the bilayer. Residues 30–616 (TQEESRIDEE…YAYGKRAKHN (587 aa)) are Extracellular-facing. Substrate-binding positions include Y136, 141–143 (RDR), and Q169. N-linked (GlcNAc...) asparagine glycosylation is found at N188, N232, N267, and N471. Substrate is bound by residues Y504, R562, and 574–580 (RWDYHAV).

Belongs to the D-glucuronyl C5-epimerase family. Homodimer. As to expression, expression in comma stage embryos is strong in the hypodermis and intestine and weaker in the head region. In late embryos, larval, and adult stages, expressed primarily in hypodermis and intestine.

It localises to the cell membrane. Its subcellular location is the secreted. The protein resides in the extracellular space. It is found in the extracellular matrix. The protein localises to the basement membrane. It catalyses the reaction [heparosan-N-sulfate](n) = [heparan-N-sulfate](n). Its pathway is glycan metabolism; heparan sulfate biosynthesis. It functions in the pathway glycan metabolism; heparin biosynthesis. Its function is as follows. Converts D-glucuronic acid residues adjacent to N-sulfate sugar residues to L-iduronic acids. Plays a role in the early migration of AQR and PQR neurons, which descend from the Q neuroblasts. In Caenorhabditis elegans, this protein is D-glucuronyl C5-epimerase (hse-5).